The following is a 506-amino-acid chain: Hippocampus abundant transcript-like protein 1 (506 aa).

The interval 1-25 (MSVEPPPELEEKAASEPEAGAMPEK) is disordered. The Extracellular segment spans residues 1–49 (MSVEPPPELEEKAASEPEAGAMPEKRAGAQAAGSTWLQGFGRPSVYHAA). A helical membrane pass occupies residues 50–70 (IVIFLEFFAWGLLTTPMLTVL). At 71–82 (HETFSQHTFLMN) the chain is on the cytoplasmic side. The helical transmembrane segment at 83-103 (GLIQGVKGLLSFLSAPLIGAL) threads the bilayer. Residues 104–111 (SDVWGRKP) are Extracellular-facing. Residues 112-132 (FLLGTVFFTCFPIPLMRISPW) form a helical membrane-spanning segment. The Cytoplasmic segment spans residues 133-134 (WY). The helical transmembrane segment at 135 to 155 (FAMISVSGVFSVTFSVIFAYV) threads the bilayer. Over 156–168 (ADVTQEHERSTAY) the chain is Extracellular. A helical membrane pass occupies residues 169–189 (GWVSATFAASLVSSPAIGAYL). Residues 190–196 (SASYGDS) lie on the Cytoplasmic side of the membrane. A helical membrane pass occupies residues 197–217 (LVVLVATVVALLDICFILVAV). The Extracellular segment spans residues 218–255 (PESLPEKMRPVSWGAQISWKQADPFASLKKVGKDSTVL). Residues 256-276 (LICITVFLSYLPEAGQYSSFF) form a helical membrane-spanning segment. Residues 277–281 (LYLRQ) are Cytoplasmic-facing. The helical transmembrane segment at 282–302 (VIGFGSVKIAAFIAMVGILSI) threads the bilayer. Over 303-319 (VAQTAFLSILMRSLGNK) the chain is Extracellular. The helical transmembrane segment at 320–340 (NTVLLGLGFQMLQLAWYGFGS) threads the bilayer. Residue glutamine 341 is a topological domain, cytoplasmic. The helical transmembrane segment at 342–362 (AWMMWAAGTVAAMSSITFPAI) threads the bilayer. Residues 363-387 (SALVSRNAESDQQGVAQGIITGIRG) are Extracellular-facing. Residues 388–408 (LCNGLGPALYGFIFYMFHVEL) traverse the membrane as a helical segment. Residues 409-428 (TELGPKLNSNNVPLQGAVIP) lie on the Cytoplasmic side of the membrane. Residues 429–449 (GPPFLFGACIVLMSFLVALFI) form a helical membrane-spanning segment. The Extracellular portion of the chain corresponds to 450 to 506 (PEYSKASGVQKHSNSSSGSLTNTPERGSDEDIEPLLQDSSIWELSSFEEPGNQCTEL). The tract at residues 457-481 (GVQKHSNSSSGSLTNTPERGSDEDI) is disordered. Over residues 459-474 (QKHSNSSSGSLTNTPE) the composition is skewed to polar residues. An N-linked (GlcNAc...) asparagine glycan is attached at asparagine 463.

Belongs to the major facilitator superfamily.

It localises to the membrane. The chain is Hippocampus abundant transcript-like protein 1 from Homo sapiens (Human).